Consider the following 262-residue polypeptide: Indole-3-glycerol phosphate synthase (262 aa).

This sequence belongs to the TrpC family.

The catalysed reaction is 1-(2-carboxyphenylamino)-1-deoxy-D-ribulose 5-phosphate + H(+) = (1S,2R)-1-C-(indol-3-yl)glycerol 3-phosphate + CO2 + H2O. It participates in amino-acid biosynthesis; L-tryptophan biosynthesis; L-tryptophan from chorismate: step 4/5. The chain is Indole-3-glycerol phosphate synthase from Chlorobium luteolum (strain DSM 273 / BCRC 81028 / 2530) (Pelodictyon luteolum).